The chain runs to 394 residues: Protein TsgA homolog (394 aa).

The next 12 membrane-spanning stretches (helical) occupy residues 11–31, 51–71, 76–96, 101–121, 135–155, 163–183, 205–225, 245–265, 273–293, 299–319, 333–353, and 362–382; these read WISF…GMVL, FLNA…EIVP, LIFG…SHSL, LCMF…TFLI, LFTD…AAAI, YWVY…ALCF, LGVA…LGFI, SVVG…SAIL, IVTA…NTTD, WIIM…ITLG, FILT…GPIV, and LATT…LGFV.

It belongs to the major facilitator superfamily. TsgA family.

It is found in the cell inner membrane. The sequence is that of Protein TsgA homolog from Erwinia tasmaniensis (strain DSM 17950 / CFBP 7177 / CIP 109463 / NCPPB 4357 / Et1/99).